Consider the following 224-residue polypeptide: 7-cyano-7-deazaguanine synthase (224 aa).

14–24 (FSGGQDSTTCL) provides a ligand contact to ATP. C190, C198, C201, and C204 together coordinate Zn(2+).

It belongs to the QueC family. Zn(2+) is required as a cofactor.

It carries out the reaction 7-carboxy-7-deazaguanine + NH4(+) + ATP = 7-cyano-7-deazaguanine + ADP + phosphate + H2O + H(+). Its pathway is purine metabolism; 7-cyano-7-deazaguanine biosynthesis. In terms of biological role, catalyzes the ATP-dependent conversion of 7-carboxy-7-deazaguanine (CDG) to 7-cyano-7-deazaguanine (preQ(0)). In Haemophilus ducreyi (strain 35000HP / ATCC 700724), this protein is 7-cyano-7-deazaguanine synthase.